We begin with the raw amino-acid sequence, 128 residues long: Sulfurtransferase TusD (128 aa).

Cys-78 (cysteine persulfide intermediate) is an active-site residue.

This sequence belongs to the DsrE/TusD family. Heterohexamer, formed by a dimer of trimers. The hexameric TusBCD complex contains 2 copies each of TusB, TusC and TusD. The TusBCD complex interacts with TusE.

The protein resides in the cytoplasm. Its function is as follows. Part of a sulfur-relay system required for 2-thiolation of 5-methylaminomethyl-2-thiouridine (mnm(5)s(2)U) at tRNA wobble positions. Accepts sulfur from TusA and transfers it in turn to TusE. The sequence is that of Sulfurtransferase TusD from Klebsiella pneumoniae subsp. pneumoniae (strain ATCC 700721 / MGH 78578).